Here is a 251-residue protein sequence, read N- to C-terminus: 3-deoxy-manno-octulosonate cytidylyltransferase (251 aa).

Belongs to the KdsB family.

It is found in the cytoplasm. It catalyses the reaction 3-deoxy-alpha-D-manno-oct-2-ulosonate + CTP = CMP-3-deoxy-beta-D-manno-octulosonate + diphosphate. Its pathway is nucleotide-sugar biosynthesis; CMP-3-deoxy-D-manno-octulosonate biosynthesis; CMP-3-deoxy-D-manno-octulosonate from 3-deoxy-D-manno-octulosonate and CTP: step 1/1. It participates in bacterial outer membrane biogenesis; lipopolysaccharide biosynthesis. In terms of biological role, activates KDO (a required 8-carbon sugar) for incorporation into bacterial lipopolysaccharide in Gram-negative bacteria. In Brucella ovis (strain ATCC 25840 / 63/290 / NCTC 10512), this protein is 3-deoxy-manno-octulosonate cytidylyltransferase.